A 516-amino-acid polypeptide reads, in one-letter code: 2-isopropylmalate synthase (516 aa).

Residues 10-271 (IRIFDTTLRD…TTGIDTRELA (262 aa)) enclose the Pyruvate carboxyltransferase domain. Residues Asp-19, His-205, His-207, and Asn-241 each coordinate Mn(2+). The segment at 396–516 (ELVSFRVEAG…REKASNRETP (121 aa)) is regulatory domain.

It belongs to the alpha-IPM synthase/homocitrate synthase family. LeuA type 1 subfamily. Homodimer. Mn(2+) serves as cofactor.

The protein resides in the cytoplasm. It carries out the reaction 3-methyl-2-oxobutanoate + acetyl-CoA + H2O = (2S)-2-isopropylmalate + CoA + H(+). It participates in amino-acid biosynthesis; L-leucine biosynthesis; L-leucine from 3-methyl-2-oxobutanoate: step 1/4. Its function is as follows. Catalyzes the condensation of the acetyl group of acetyl-CoA with 3-methyl-2-oxobutanoate (2-ketoisovalerate) to form 3-carboxy-3-hydroxy-4-methylpentanoate (2-isopropylmalate). This is 2-isopropylmalate synthase from Acidimicrobium ferrooxidans (strain DSM 10331 / JCM 15462 / NBRC 103882 / ICP).